We begin with the raw amino-acid sequence, 312 residues long: Olfactory receptor 6C75 (312 aa).

Topologically, residues 1-23 (MRNSTAVTDFILLGLTSDPQWQV) are extracellular. N-linked (GlcNAc...) asparagine glycosylation occurs at Asn-3. Residues 24–44 (VLFIFLLVTYMLSVTGNLIII) traverse the membrane as a helical segment. The Cytoplasmic segment spans residues 45–63 (TLTLSDPHLQTPMYFFLRN). Residues 64–84 (FSFLEISFTSVCIPRFLVTVV) traverse the membrane as a helical segment. The Extracellular portion of the chain corresponds to 85–95 (TGNRTISYNGC). Cys-95 and Cys-177 are disulfide-bonded. The chain crosses the membrane as a helical span at residues 96–116 (VAQLFFFIFLGVTEFYLLAAM). Residues 117 to 140 (SYDRCMAICKPLHYTIIMSTRVCT) are Cytoplasmic-facing. The chain crosses the membrane as a helical span at residues 141–161 (LLVFSSWLAGFLIIFPPVMLL). The Extracellular portion of the chain corresponds to 162 to 194 (LQLDFCASNVIDHFICDSSPMLQLSCTNTHFLE). Residues 195 to 215 (LMAFFLAVVTLMVTLTLVILS) traverse the membrane as a helical segment. Residues 216 to 237 (YTNIIRTILKIPSMSQRKKAFS) are Cytoplasmic-facing. The chain crosses the membrane as a helical span at residues 238–258 (TCSSHMIVVSISYSSCIFMYI). Over 259–269 (KTSARERVTLS) the chain is Extracellular. The chain crosses the membrane as a helical span at residues 270–290 (KGVAVLNTSVAPLLNPFIYTL). The Cytoplasmic portion of the chain corresponds to 291 to 312 (RNKQVKQAFKSMVQKMIFSLNK).

The protein belongs to the G-protein coupled receptor 1 family.

The protein resides in the cell membrane. Odorant receptor. This Homo sapiens (Human) protein is Olfactory receptor 6C75 (OR6C75).